Consider the following 371-residue polypeptide: DNA replication and repair protein RecF (371 aa).

An ATP-binding site is contributed by 30–37 (GENAQGKT).

This sequence belongs to the RecF family.

The protein localises to the cytoplasm. In terms of biological role, the RecF protein is involved in DNA metabolism; it is required for DNA replication and normal SOS inducibility. RecF binds preferentially to single-stranded, linear DNA. It also seems to bind ATP. The protein is DNA replication and repair protein RecF of Staphylococcus epidermidis (strain ATCC 12228 / FDA PCI 1200).